The following is a 521-amino-acid chain: MFS siderochrome iron transporter 1 (521 aa).

Residues 1-10 (MDKTASLTSQ) show a composition bias toward polar residues. A disordered region spans residues 1-29 (MDKTASLTSQDAEKHDPDALRKERATDPP). Over residues 11–29 (DAEKHDPDALRKERATDPP) the composition is skewed to basic and acidic residues. 5 consecutive transmembrane segments (helical) span residues 62-82 (WGLF…PLMG), 99-119 (FLSL…AFGC), 126-146 (WSFN…GGTQ), 148-168 (FVAL…NMPV), and 187-207 (ILSI…WPLI). An N-linked (GlcNAc...) asparagine glycan is attached at Asn-209. 6 helical membrane-spanning segments follow: residues 229 to 249 (YLLF…FFVF), 330 to 350 (LAWS…ASTL), 379 to 399 (VIIA…VEQP), 404 to 424 (KGTL…TTTA), 431 to 451 (LGWN…LYAI), and 466 to 486 (GLTA…ALYA). Residue Asn-487 is glycosylated (N-linked (GlcNAc...) asparagine). Residues 491 to 511 (AVPVYVSGALIIASGAMALLL) traverse the membrane as a helical segment.

This sequence belongs to the major facilitator superfamily.

The protein localises to the membrane. In terms of biological role, major facilitator transporter probably involved in siderophore basidioferrin transmembrane transport. The protein is MFS siderochrome iron transporter 1 of Ceriporiopsis subvermispora (strain B) (White-rot fungus).